The sequence spans 86 residues: ATP synthase epsilon chain (86 aa).

Belongs to the ATPase epsilon chain family. In terms of assembly, F-type ATPases have 2 components, CF(1) - the catalytic core - and CF(0) - the membrane proton channel. CF(1) has five subunits: alpha(3), beta(3), gamma(1), delta(1), epsilon(1). CF(0) has three main subunits: a, b and c.

It localises to the cell inner membrane. Functionally, produces ATP from ADP in the presence of a proton gradient across the membrane. The protein is ATP synthase epsilon chain (atpC) of Caulobacter vibrioides (strain ATCC 19089 / CIP 103742 / CB 15) (Caulobacter crescentus).